Consider the following 1087-residue polypeptide: Kinesin-like protein KIN-14F (1087 aa).

The Calponin-homology (CH) domain maps to 1–110; sequence MDQGAMETLP…CILCLKGFYE (110 aa). The disordered stretch occupies residues 136 to 155; the sequence is SSPPQYGIGSESTTDESVSL. One can recognise a Kinesin motor domain in the interval 377–705; that stretch reads TIRVYCRVRP…LKFAQRVASI (329 aa). 461 to 468 serves as a coordination point for ATP; that stretch reads GQTGSGKT. The stretch at 710-749 forms a coiled coil; the sequence is ARSNKETGEIRDLKDEISSLKSAMEKKEAELEQLRSGSIR. Disordered regions lie at residues 740 to 858, 923 to 949, and 1004 to 1087; these read LEQL…PVSR, QGGVKKTRAESSKAKAKQPSPARFQKL, and DSTL…FMVP. Polar residues-rich tracts occupy residues 744 to 754, 780 to 797, and 836 to 856; these read RSGSIRNTTEC, PQPNDGTRSYETRSCSTG, and TDRASTIKSRNKPDVTQNLPV. The segment covering 1017–1033 has biased composition (polar residues); sequence EPPSKSKNAQRNSSKNS. Positions 1042–1054 are enriched in basic and acidic residues; the sequence is YAHEDTSLVDDKP. Positions 1076–1087 are enriched in basic residues; it reads SRSTHHARFMVP.

It belongs to the TRAFAC class myosin-kinesin ATPase superfamily. Kinesin family. KIN-14 subfamily. Interacts (via C-terminus) with VDAC3. In terms of tissue distribution, expressed in roots, leaves, stems and flowers (at protein level).

The protein resides in the cytoplasm. Its subcellular location is the cytoskeleton. It is found in the mitochondrion. Functionally, required for keeping the ATP levels stable and balancing the aerobic respiration pathways during seed germination at low temperature. This Arabidopsis thaliana (Mouse-ear cress) protein is Kinesin-like protein KIN-14F.